The primary structure comprises 299 residues: Endonuclease G, mitochondrial (299 aa).

The N-terminal 48 residues, 1–48, are a transit peptide targeting the mitochondrion; sequence MQLLRAGLTLALGAGLGAAAESWWRQRADARATPGLLSRLPVLPVAAA. Threonine 130 bears the Phosphothreonine mark. Histidine 143 functions as the Proton acceptor in the catalytic mechanism. Asparagine 174 contacts Mg(2+). Residues 288-298 form an essential for deoxyribonuclease activity region; sequence AGSLKAITAGS. Serine 290 bears the Phosphoserine mark.

The protein belongs to the DNA/RNA non-specific endonuclease family. Homodimer; disulfide-linked. Homodimerization is essential for its activity. Interacts with YWHAG. Mg(2+) is required as a cofactor. GSK3-beta-mediated dual phosphorylations at Thr-130 and Ser-290 is necessary for its interaction with YWHAG and the induction of autophagy.

It localises to the mitochondrion. Its function is as follows. Endonuclease that preferentially catalyzes the cleavage of double-stranded 5-hydroxymethylcytosine (5hmC)-modified DNA. The 5hmC-modified nucleotide does not increase the binding affinity, but instead increases the efficiency of cutting and specifies the site of cleavage for the modified DNAs. Shows significantly higher affinity for four- stranded Holliday junction over duplex and single-stranded DNAs. Promotes conservative recombination when the DNA is 5hmC-modified. Promotes autophagy through the suppression of mTOR by its phosphorylation-mediated interaction with YWHAG and its endonuclease activity-mediated DNA damage response. GSK3-beta mediated phosphorylation of ENDOG enhances its interaction with YWHAG, leading to the release of TSC2 and PIK3C3 from YWHAG resulting in mTOR pathway suppression and autophagy initiation. Promotes cleavage of mtDNA in response to oxidative and nitrosative stress, in turn inducing compensatory mtDNA replication. In Bos taurus (Bovine), this protein is Endonuclease G, mitochondrial (ENDOG).